We begin with the raw amino-acid sequence, 341 residues long: UDP-glucose 4-epimerase (341 aa).

It belongs to the polysaccharide synthase family.

It carries out the reaction UDP-alpha-D-glucose = UDP-alpha-D-galactose. In terms of biological role, epimerizes UDP-galactose to UDP-glucose. This chain is UDP-glucose 4-epimerase (capD), found in Rickettsia typhi (strain ATCC VR-144 / Wilmington).